A 124-amino-acid polypeptide reads, in one-letter code: Small ribosomal subunit protein uS12 (124 aa).

The residue at position 89 (Asp-89) is a 3-methylthioaspartic acid. Positions Leu-104–Lys-124 are disordered. Over residues Ser-113 to Lys-124 the composition is skewed to basic residues.

The protein belongs to the universal ribosomal protein uS12 family. Part of the 30S ribosomal subunit. Contacts proteins S8 and S17. May interact with IF1 in the 30S initiation complex.

Functionally, with S4 and S5 plays an important role in translational accuracy. Its function is as follows. Interacts with and stabilizes bases of the 16S rRNA that are involved in tRNA selection in the A site and with the mRNA backbone. Located at the interface of the 30S and 50S subunits, it traverses the body of the 30S subunit contacting proteins on the other side and probably holding the rRNA structure together. The combined cluster of proteins S8, S12 and S17 appears to hold together the shoulder and platform of the 30S subunit. The sequence is that of Small ribosomal subunit protein uS12 from Thiomonas delicata (Thiomonas cuprina).